A 414-amino-acid polypeptide reads, in one-letter code: Succinylornithine transaminase (414 aa).

K260 carries the N6-(pyridoxal phosphate)lysine modification.

It belongs to the class-III pyridoxal-phosphate-dependent aminotransferase family. AstC subfamily. It depends on pyridoxal 5'-phosphate as a cofactor.

It carries out the reaction N(2)-succinyl-L-ornithine + 2-oxoglutarate = N-succinyl-L-glutamate 5-semialdehyde + L-glutamate. The protein operates within amino-acid degradation; L-arginine degradation via AST pathway; L-glutamate and succinate from L-arginine: step 3/5. In terms of biological role, catalyzes the transamination of N(2)-succinylornithine and alpha-ketoglutarate into N(2)-succinylglutamate semialdehyde and glutamate. Can also act as an acetylornithine aminotransferase. This is Succinylornithine transaminase from Yersinia pestis bv. Antiqua (strain Antiqua).